The following is a 431-amino-acid chain: Pachytene checkpoint protein 2 homolog (431 aa).

Position 1 is an N-acetylmethionine (Met-1). 179–186 (GPPGTGKT) is an ATP binding site.

The protein belongs to the AAA ATPase family. PCH2 subfamily. Specifically interacts with the ligand binding domain of the thyroid receptor (TR). This interaction does not require the presence of thyroid hormone for its interaction. Interacts with proteasome subunit PSMA8; to participate in meiosis progression during spermatogenesis.

In terms of biological role, plays a key role in chromosome recombination and chromosome structure development during meiosis. Required at early steps in meiotic recombination that leads to non-crossovers pathways. Also needed for efficient completion of homologous synapsis by influencing crossover distribution along the chromosomes affecting both crossovers and non-crossovers pathways. Also required for development of higher-order chromosome structures and is needed for synaptonemal-complex formation. In males, required for efficient synapsis of the sex chromosomes and for sex body formation. Promotes early steps of the DNA double-strand breaks (DSBs) repair process upstream of the assembly of RAD51 complexes. Required for depletion of HORMAD1 and HORMAD2 from synapsed chromosomes. Plays a role in mitotic spindle assembly checkpoint (SAC) activation. This chain is Pachytene checkpoint protein 2 homolog (TRIP13), found in Sus scrofa (Pig).